Here is a 149-residue protein sequence, read N- to C-terminus: Ribonuclease H (149 aa).

One can recognise an RNase H type-1 domain in the interval 4–145; it reads QRGVVEAFTD…ADALANQGID (142 aa). The Mg(2+) site is built by Asp-13, Glu-51, Asp-73, and Asp-137.

Belongs to the RNase H family. As to quaternary structure, monomer. The cofactor is Mg(2+).

The protein localises to the cytoplasm. The enzyme catalyses Endonucleolytic cleavage to 5'-phosphomonoester.. Its function is as follows. Endonuclease that specifically degrades the RNA of RNA-DNA hybrids. The protein is Ribonuclease H of Halorhodospira halophila (strain DSM 244 / SL1) (Ectothiorhodospira halophila (strain DSM 244 / SL1)).